Here is a 1852-residue protein sequence, read N- to C-terminus: MESGSGGGGGGGVAALASFIMNEEELKRKQREKLKKLQATGGNPRPPRSLFFFTLKNPFRKTCINIVEWKPFEIIILLTIFANCVALAVFLPMPEEDTNNTNLTLESLEYIFLVIFTLECFLKIVAYGLLFHEGAYLRNCWNILDFVIVFMGLFTLVVDTINTIAGVPTEKGGGFDMKALRAFRVLRPLRLVSGVPSLQVVMSSILKSMLPLFHIALLVFFMVHIYAIMGLELFKCKMHKTCYYQGTNIIAVREGNEKPSPCAQAGHGRRCTINGTECRAGWPGPNFGITHFDNSCFAMLTVFQCITTESWTDVLYWINDAMGNDWPWIYFLTLILVGSFFILNLVLGALSGEFTKEREESRSRGEYQKLRERQQMDEDLEGYMEWITHAEVMDGDSEALLLLRKDTDSESDSLYQMLDQQVIYFYRLARRWNVVLRRKCHVWVKSKFFNWWVLLVVLLNTLVIAMEHHNQTEGLTSFQDTANVILLACFTIEMVMKMYAFGPRAYFMSIFNRFDCFVVTIGILEIILVVSNIMTPLGISVMRCIRLLRLFKLTRYWTSLNNLVASLLNSVKSIASLLLLLFLFIVIFALLGMQVFGGKFNFPDRVIQRSNFDNFPQALISVFQVLTGEEWDSIMYNGIMAHGGPQSPGILVSIYFIILYVCGNFVLLNVFLAIAVDNLAEAESLTAAQKEKAEEKARRKLMRTLPEKSEEEKALMAKRLMESRSKAEGMPTTAKLKIDEFESNVNEVKDPFPPADFPGDHEEVEPEIPISPRPRPMADLQLKETVVPIAEASSFFIFGPQHKFRKLCHRIVNHTTFTNIILLFILLSSISLAAEDPIDPRSFRNKVLAYADIVFTTVFTIEIVLKMTVYGAFLHTGSFCRNSFNILDLIVVGVSLLSMGMESSTISVVKILRVLRVLRPLRAINRAKGLKHVVQCMFVAIKTIGNIVLVTMLLDFMFACIGVQLFKGKLYYCTDPLQKTAEECQGTFLKHVPNSLHDIEVHQRMWVNSDFNFDNVLNGMLALFTISTFEGWPEILYKAIDSNAVDTGPLYNNRVGISIFFIIYIIIIAFFMMNIFVGFVIVTFQKQGEQEYKDCELDKNQRQCVQYALKARPLKCYIPKNPHQYRVWYFVTSCYFEYLMFFLIMLNTLCLGIQHCNQSDHITKLSDTLNLIFTVLFTGEMIVKLIAFKAKGYFGDPWNVFDFIIVVGSIVDVVLSEVDAALEARGGLWCLHGCAEVNPMQAIAEAENVRVSITFFRLFRVLRLIKLLNRSEGIRNLLWTFIKSFQALPHVGLLIVMLFFIYAVIGMQMFGKVALVDGTEINRNNNFQTFPQAVLLLFRVATGEQWPKVILASMYGKLCDAKSDYGPGEEYTCGSSIAVFYFLSFYILCAFLIINLFVAIIMDNVDYLTRDWSILGPHHLDEFKKIWAEYDPEATGRIKHLDVVTLLRRIQPPLGFGKFCPHRSACKRLISMNMPLNSDGTVTFNATLFALVRTALKIKTEGNFEQANEELRAIIKSIWKRTSMKLLDQVIPPIGEDEVTVGKFYATFLIQEHFRKFMQRQEEYYGYRPTKKNADEIKAGLRSIEEEAAPELHRAISGDLIAEDDMERALEAGEEGIYRRTGGLFGLHTDPFSSEPSSPLSTQMTSQRPLQFVETRLEDIESPPDSVFLPNTEFFPDNMPTTTNTNNNANFVEDMSSRFTFENESLSAAATRNYSYEDIRGSSSYVGGASSVDDRRLSDFTVRTNITQFPYNPSYGPSKNQTATEASPATDKLIQQALRDGGLDSLAEDPKFVSVTRKELAEAINIGMEDMEGMAQGIVNRQSGKVTKRKRRPIPVPPGTKSTKPKENTSAV.

Residues 1–70 are Cytoplasmic-facing; it reads MESGSGGGGG…KTCINIVEWK (70 aa). An I repeat occupies 57 to 354; that stretch reads NPFRKTCINI…LVLGALSGEF (298 aa). A helical membrane pass occupies residues 71-86; that stretch reads PFEIIILLTIFANCVA. Residues 87–107 lie on the Extracellular side of the membrane; that stretch reads LAVFLPMPEEDTNNTNLTLES. N-linked (GlcNAc...) asparagine glycans are attached at residues asparagine 99 and asparagine 102. The chain crosses the membrane as a helical span at residues 108-127; it reads LEYIFLVIFTLECFLKIVAY. The Cytoplasmic segment spans residues 128-139; that stretch reads GLLFHEGAYLRN. The helical transmembrane segment at 140 to 155 threads the bilayer; it reads CWNILDFVIVFMGLFT. Topologically, residues 156–176 are extracellular; the sequence is LVVDTINTIAGVPTEKGGGFD. Residues 177–195 traverse the membrane as a helical segment; that stretch reads MKALRAFRVLRPLRLVSGV. Over 196 to 214 the chain is Cytoplasmic; that stretch reads PSLQVVMSSILKSMLPLFH. The chain crosses the membrane as a helical span at residues 215 to 234; sequence IALLVFFMVHIYAIMGLELF. Residues 235-326 are Extracellular-facing; that stretch reads KCKMHKTCYY…WINDAMGNDW (92 aa). N-linked (GlcNAc...) asparagine glycosylation is present at asparagine 274. A helical membrane pass occupies residues 327 to 351; sequence PWIYFLTLILVGSFFILNLVLGALS. The Cytoplasmic segment spans residues 352–447; sequence GEFTKEREES…RKCHVWVKSK (96 aa). The segment at 374 to 391 is binding to the beta subunit; sequence QQMDEDLEGYMEWITHAE. An II repeat occupies 433-679; that stretch reads NVVLRRKCHV…VFLAIAVDNL (247 aa). A helical membrane pass occupies residues 448 to 466; it reads FFNWWVLLVVLLNTLVIAM. At 467–481 the chain is on the extracellular side; it reads EHHNQTEGLTSFQDT. An N-linked (GlcNAc...) asparagine glycan is attached at asparagine 470. The helical transmembrane segment at 482-501 threads the bilayer; the sequence is ANVILLACFTIEMVMKMYAF. The Cytoplasmic segment spans residues 502-509; that stretch reads GPRAYFMS. Residues 510–528 form a helical membrane-spanning segment; sequence IFNRFDCFVVTIGILEIIL. The Extracellular segment spans residues 529–538; sequence VVSNIMTPLG. The helical transmembrane segment at 539 to 557 threads the bilayer; sequence ISVMRCIRLLRLFKLTRYW. Topologically, residues 558–576 are cytoplasmic; it reads TSLNNLVASLLNSVKSIAS. Residues 577–596 form a helical membrane-spanning segment; it reads LLLLLFLFIVIFALLGMQVF. Residues 597 to 651 are Extracellular-facing; the sequence is GGKFNFPDRVIQRSNFDNFPQALISVFQVLTGEEWDSIMYNGIMAHGGPQSPGIL. Residues 652–675 traverse the membrane as a helical segment; that stretch reads VSIYFIILYVCGNFVLLNVFLAIA. Residues 676-815 are Cytoplasmic-facing; that stretch reads VDNLAEAESL…KLCHRIVNHT (140 aa). An III repeat occupies 802-1084; it reads HKFRKLCHRI…IFVGFVIVTF (283 aa). A helical membrane pass occupies residues 816 to 834; the sequence is TFTNIILLFILLSSISLAA. Residues 835 to 850 lie on the Extracellular side of the membrane; sequence EDPIDPRSFRNKVLAY. A helical transmembrane segment spans residues 851 to 870; it reads ADIVFTTVFTIEIVLKMTVY. The Cytoplasmic portion of the chain corresponds to 871–882; sequence GAFLHTGSFCRN. The helical transmembrane segment at 883–901 threads the bilayer; that stretch reads SFNILDLIVVGVSLLSMGM. Over 902 to 908 the chain is Extracellular; the sequence is ESSTISV. The helical transmembrane segment at 909–927 threads the bilayer; it reads VKILRVLRVLRPLRAINRA. The Cytoplasmic portion of the chain corresponds to 928–946; the sequence is KGLKHVVQCMFVAIKTIGN. Residues 947–966 traverse the membrane as a helical segment; sequence IVLVTMLLDFMFACIGVQLF. The Extracellular portion of the chain corresponds to 967–1056; that stretch reads KGKLYYCTDP…TGPLYNNRVG (90 aa). The tract at residues 1004-1093 is dihydropyridine binding; the sequence is RMWVNSDFNF…FQKQGEQEYK (90 aa). The chain crosses the membrane as a helical span at residues 1057-1081; that stretch reads ISIFFIIYIIIIAFFMMNIFVGFVI. At 1082 to 1134 the chain is on the cytoplasmic side; the sequence is VTFQKQGEQEYKDCELDKNQRQCVQYALKARPLKCYIPKNPHQYRVWYFVTSC. The IV repeat unit spans residues 1121–1405; it reads NPHQYRVWYF…LFVAIIMDNV (285 aa). The helical transmembrane segment at 1135–1153 threads the bilayer; that stretch reads YFEYLMFFLIMLNTLCLGI. Topologically, residues 1154–1168 are extracellular; it reads QHCNQSDHITKLSDT. Asparagine 1157 carries N-linked (GlcNAc...) asparagine glycosylation. Residues 1169–1188 traverse the membrane as a helical segment; that stretch reads LNLIFTVLFTGEMIVKLIAF. Residues 1189–1196 lie on the Cytoplasmic side of the membrane; that stretch reads KAKGYFGD. A helical membrane pass occupies residues 1197–1215; that stretch reads PWNVFDFIIVVGSIVDVVL. The Extracellular portion of the chain corresponds to 1216–1252; it reads SEVDAALEARGGLWCLHGCAEVNPMQAIAEAENVRVS. A helical transmembrane segment spans residues 1253-1271; that stretch reads ITFFRLFRVLRLIKLLNRS. The Cytoplasmic segment spans residues 1272–1290; the sequence is EGIRNLLWTFIKSFQALPH. A helical membrane pass occupies residues 1291 to 1310; it reads VGLLIVMLFFIYAVIGMQMF. The Extracellular segment spans residues 1311 to 1377; that stretch reads GKVALVDGTE…GEEYTCGSSI (67 aa). Positions 1358–1424 are dihydropyridine binding; sequence LCDAKSDYGP…LGPHHLDEFK (67 aa). The tract at residues 1370–1413 is phenylalkylamine binding; sequence EYTCGSSIAVFYFLSFYILCAFLIINLFVAIIMDNVDYLTRDWS. The helical transmembrane segment at 1378–1402 threads the bilayer; the sequence is AVFYFLSFYILCAFLIINLFVAIIM. Over 1403–1852 the chain is Cytoplasmic; it reads DNVDYLTRDW…TKPKENTSAV (450 aa). The EF-hand domain occupies 1418–1453; it reads HHLDEFKKIWAEYDPEATGRIKHLDVVTLLRRIQPP. Ca(2+) is bound by residues aspartate 1431, glutamate 1433, threonine 1435, arginine 1437, and aspartate 1442. Residues 1820–1852 form a disordered region; that stretch reads NRQSGKVTKRKRRPIPVPPGTKSTKPKENTSAV.

It belongs to the calcium channel alpha-1 subunit (TC 1.A.1.11) family. As to quaternary structure, multisubunit complex consisting of alpha-1, alpha-2, beta and delta subunits in a 1:1:1:1 ratio. The channel activity is directed by the pore-forming and voltage-sensitive alpha-1 subunit. In many cases, this subunit is sufficient to generate voltage-sensitive calcium channel activity. The auxiliary subunits beta and alpha-2/delta linked by a disulfide bridge regulate the channel activity. An additional gamma subunit is present only in skeletal muscle L-type channel. Post-translationally, may be non-phosphorylated. In terms of tissue distribution, skeletal muscle.

It localises to the membrane. Functionally, voltage-sensitive calcium channels (VSCC) mediate the entry of calcium ions into excitable cells and are also involved in a variety of calcium-dependent processes, including muscle contraction, gene expression, cell motility, cell division and cell death. The isoform alpha-1S gives rise to L-type calcium currents. Long-lasting (L-type) calcium channels belong to the 'high-voltage activated' (HVA) group. They are blocked by dihydropyridines (DHP), phenylalkylamines, and by benzothiazepines. Calcium channels containing the alpha-1S subunit play an important role in excitation-contraction coupling in skeletal muscle. The chain is Dihydropyridine-sensitive L-type skeletal muscle calcium channel subunit alpha-1 from Cyprinus carpio (Common carp).